The primary structure comprises 59 residues: Photosystem II reaction center protein K (59 aa).

A propeptide spanning residues 1–22 is cleaved from the precursor; it reads MLNIFSLICLSSALHSSSFFFA. A helical transmembrane segment spans residues 38–58; that stretch reads MPVIPVLFFLLALVWQAAVSF.

It belongs to the PsbK family. As to quaternary structure, PSII is composed of 1 copy each of membrane proteins PsbA, PsbB, PsbC, PsbD, PsbE, PsbF, PsbH, PsbI, PsbJ, PsbK, PsbL, PsbM, PsbT, PsbX, PsbY, PsbZ, Psb30/Ycf12, at least 3 peripheral proteins of the oxygen-evolving complex and a large number of cofactors. It forms dimeric complexes.

It localises to the plastid. It is found in the chloroplast thylakoid membrane. One of the components of the core complex of photosystem II (PSII). PSII is a light-driven water:plastoquinone oxidoreductase that uses light energy to abstract electrons from H(2)O, generating O(2) and a proton gradient subsequently used for ATP formation. It consists of a core antenna complex that captures photons, and an electron transfer chain that converts photonic excitation into a charge separation. The protein is Photosystem II reaction center protein K of Piper cenocladum (Ant piper).